Here is a 141-residue protein sequence, read N- to C-terminus: Galactose-6-phosphate isomerase subunit LacA 1 (141 aa).

Belongs to the LacAB/RpiB family. As to quaternary structure, heteromultimeric protein consisting of LacA and LacB.

The enzyme catalyses aldehydo-D-galactose 6-phosphate = keto-D-tagatose 6-phosphate. The protein operates within carbohydrate metabolism; D-galactose 6-phosphate degradation; D-tagatose 6-phosphate from D-galactose 6-phosphate: step 1/1. In Streptococcus agalactiae serotype III (strain NEM316), this protein is Galactose-6-phosphate isomerase subunit LacA 1.